A 161-amino-acid polypeptide reads, in one-letter code: Allophycocyanin alpha chain (161 aa).

The residue at position 71 (N71) is an N4-methylasparagine. C81 serves as a coordination point for (2R,3E)-phycocyanobilin.

The protein belongs to the phycobiliprotein family. As to quaternary structure, heterodimer of an alpha and a beta chain. In terms of processing, contains one covalently linked phycocyanobilin chromophore.

It localises to the plastid. Its subcellular location is the chloroplast thylakoid membrane. Light-harvesting photosynthetic bile pigment-protein from the phycobiliprotein complex. Allophycocyanin has a maximum absorption at approximately 650 nanometers. In Porphyra purpurea (Red seaweed), this protein is Allophycocyanin alpha chain (apcA).